The following is a 637-amino-acid chain: Glutamate--cysteine ligase catalytic subunit (637 aa).

Methionine 1 is modified (N-acetylmethionine). Residues serine 5 and serine 8 each carry the phosphoserine modification.

The protein belongs to the glutamate--cysteine ligase type 3 family. Heterodimer of a catalytic heavy chain and a regulatory light chain. In terms of tissue distribution, most abundant in kidney. Also found in liver and testis.

It carries out the reaction L-cysteine + L-glutamate + ATP = gamma-L-glutamyl-L-cysteine + ADP + phosphate + H(+). The catalysed reaction is (2S)-2-aminobutanoate + L-glutamate + ATP = gamma-L-glutamyl-(2S)-2-aminobutanoate + ADP + phosphate + H(+). It participates in sulfur metabolism; glutathione biosynthesis; glutathione from L-cysteine and L-glutamate: step 1/2. Its activity is regulated as follows. Feedback inhibition by glutathione. Its function is as follows. Catalyzes the ATP-dependent ligation of L-glutamate and L-cysteine and participates in the first and rate-limiting step in glutathione biosynthesis. The polypeptide is Glutamate--cysteine ligase catalytic subunit (Rattus norvegicus (Rat)).